The chain runs to 162 residues: Caveolin-2 (162 aa).

Over 1 to 86 (MGLETEKADV…FEISKYVMYK (86 aa)) the chain is Cytoplasmic. At Y19 the chain carries Phosphotyrosine; by SRC. Residues S20 and S23 each carry the phosphoserine modification. Position 27 is a phosphotyrosine; by SRC (Y27). The residue at position 36 (S36) is a Phosphoserine. The helical intramembrane region spans 87–107 (FLTVFLAIPLAFIAGILFATL). Topologically, residues 108 to 162 (SCLHIWILMPFVKTCLMVLPSVQTIWKSVTDVIIAPLCTSVGRCFSSVSLQLSQD) are cytoplasmic.

Belongs to the caveolin family. In terms of assembly, monomer or homodimer. Interacts with CAV1; the interaction forms a stable heterooligomeric complex that is required for targeting to lipid rafts and for caveolae formation. Tyrosine phosphorylated forms do not form heterooligomers with the Tyr-19-phosphorylated form existing as a monomer or dimer, and the Tyr-27-form as a monomer only. Interacts (tyrosine phosphorylated form) with the SH2 domain-containing proteins, RASA1, NCK1 and SRC. Interacts (tyrosine phosphorylated form) with INSR, the interaction (Tyr-27-phosphorylated form) is increased on insulin stimulation. Interacts (Tyr-19 phosphorylated form) with MAPK1 (phosphorylated form); the interaction, promoted by insulin, leads to nuclear location and MAPK1 activation. Interacts with STAT3; the interaction is increased on insulin-induced tyrosine phosphorylation leading to STAT activation. Post-translationally, phosphorylated on serine and tyrosine residues. CAV1 promotes phosphorylation on Ser-23 which then targets the complex to the plasma membrane, lipid rafts and caveolae. Phosphorylation on Ser-36 appears to modulate mitosis in endothelial cells. Phosphorylation on both Tyr-19 and Tyr-27 is required for insulin-induced 'Ser-727' phosphorylation of STAT3 and its activation. Phosphorylation on Tyr-19 is required for insulin-induced phosphorylation of MAPK1 and DNA binding of STAT3. Tyrosine phosphorylation is induced by both EGF and insulin (By. similarity).

Its subcellular location is the nucleus. The protein resides in the cytoplasm. It is found in the golgi apparatus membrane. It localises to the cell membrane. The protein localises to the membrane. Its subcellular location is the caveola. May act as a scaffolding protein within caveolar membranes. Interacts directly with G-protein alpha subunits and can functionally regulate their activity. Acts as an accessory protein in conjunction with CAV1 in targeting to lipid rafts and driving caveolae formation. The Ser-36 phosphorylated form has a role in modulating mitosis in endothelial cells. Positive regulator of cellular mitogenesis of the MAPK signaling pathway. Required for the insulin-stimulated nuclear translocation and activation of MAPK1 and STAT3, and the subsequent regulation of cell cycle progression. This chain is Caveolin-2 (CAV2), found in Gorilla gorilla gorilla (Western lowland gorilla).